Consider the following 390-residue polypeptide: Ketoisovalerate reductase BEA2 (390 aa).

70–75 (GPGNIG) lines the NADP(+) pocket. K285 (proton donor) is an active-site residue. Substrate contacts are provided by N289 and N293.

Belongs to the ketopantoate reductase family.

The catalysed reaction is (R)-2-hydroxy-3-methylbutanoate + NADP(+) = 3-methyl-2-oxobutanoate + NADPH + H(+). With respect to regulation, the reductase activity is increased by Mg(2+) (195%), Ca(2+) (169%) and slightly increased by K(+) (123%). The reduction activity is inhibited by Fe(2+) and Co(2+), and almost totally inhibited by Cu(2+), Mn(2+), Zn(2+) and Fe(3+) (from 3% to 9% residual activity respectively). The chelating agent EDTA had little effect, suggesting Mg(2+) and Ca(2+) are not determining factors, though they could promote the reductase enzyme activity. Ketoisovalerate reductase; part of the gene cluster that mediates the biosynthesis of beauvericin (BEA), a non-ribosomal cyclic hexadepsipeptide that shows antibiotic, antifungal, insecticidal, and cancer cell antiproliferative and antihaptotactic activity. Ketoisovalerate reductase BEA2 catalyzes the NADPH-specific reduction of ketoisovaleric acid to hydroxyisovalerate, a precursor for beauvericin biosynthesis. The nonribosomal cyclodepsipeptide synthetase BEA1 then catalyzes the formation of beauvericin via condensation and cyclization of 3 dipeptidol monomers, each composed of one unit of hydroxyisovalerate and one unit of N-methyl-phenylalanine. In Gibberella intermedia (Bulb rot disease fungus), this protein is Ketoisovalerate reductase BEA2.